Consider the following 180-residue polypeptide: Geminin homolog (180 aa).

A compositionally biased stretch (polar residues) spans methionine 1–lysine 27. The tract at residues methionine 1–isoleucine 29 is disordered.

It belongs to the geminin family. Homodimer. Interacts with cdt-1; the interaction most likely inhibits the ability of cdt-1 to load the mini-chromosome maintenance (MCM) complex onto DNA and therefore reduces DNA replication licensing activity. Interacts with nob-1 and ceh-32.

Its subcellular location is the cytoplasm. It localises to the nucleus. In terms of biological role, inhibits DNA replication by binding to the DNA replication licensing factor cdt-1. Its interaction with cdt-1 prevents the cdt-1 loading of the mini-chromosome maintenance (MCM) complex onto DNA and therefore DNA replication licencing. The protein is Geminin homolog of Caenorhabditis elegans.